Consider the following 728-residue polypeptide: Methionine--tRNA ligase (728 aa).

The 'HIGH' region motif lies at 13–23 (PYANGSIHLGH). The Zn(2+) site is built by Cys144, Cys147, Cys157, and Cys160. A 'KMSKS' region motif is present at residues 348–352 (KMSKS). Lys351 contacts ATP. The disordered stretch occupies residues 585 to 620 (LAPAKSQQVAQAVETMEKNSSTTPAPAKEGEAGQAS). A tRNA-binding domain is found at 628-728 (DFGKIDLRVA…EGARPGMKVK (101 aa)).

It belongs to the class-I aminoacyl-tRNA synthetase family. MetG type 1 subfamily. In terms of assembly, homodimer. Requires Zn(2+) as cofactor.

The protein localises to the cytoplasm. The catalysed reaction is tRNA(Met) + L-methionine + ATP = L-methionyl-tRNA(Met) + AMP + diphosphate. Is required not only for elongation of protein synthesis but also for the initiation of all mRNA translation through initiator tRNA(fMet) aminoacylation. The polypeptide is Methionine--tRNA ligase (Nitrosospira multiformis (strain ATCC 25196 / NCIMB 11849 / C 71)).